The following is a 295-amino-acid chain: (R)-phenoxypropionate/alpha-ketoglutarate-dioxygenase (295 aa).

Fe cation is bound by residues H111 and D113. 2-oxoglutarate contacts are provided by T138 and W255. Position 270 (H270) interacts with Fe cation. Residue R281 participates in 2-oxoglutarate binding.

The protein belongs to the TfdA dioxygenase family. Homotrimer. Fe cation is required as a cofactor. The cofactor is L-ascorbate.

The enzyme catalyses (R)-2-(4-chloro-2-methylphenoxy)propanoate + 2-oxoglutarate + O2 = 2-methyl-4-chlorophenol + pyruvate + succinate + CO2. It carries out the reaction (R)-(2,4-dichlorophenoxy)propanoate + 2-oxoglutarate + O2 = 2,4-dichlorophenol + pyruvate + succinate + CO2. It functions in the pathway xenobiotic degradation; 2-(2,4-dichlorophenoxy)propanoate degradation. Its activity is regulated as follows. Inhibited by divalent cations, most significantly by copper and nickel, and by diethylpyrocarbonate (DEPC). Its function is as follows. Involved in the degradation of the phenoxypropionate herbicides. Catalyzes the enantiospecific cleavage of the ether bond in the herbicid R-dichlorprop ((R)-2-(2,4-dichlorophenoxy)propionate)(R-2,4-DP) and R-mecoprop ((R)-2-(4-chloro-2-methylphenoxy)propionate)(R-2,4-MCPP). It can also accept (RS)-2-(2,4,5-trichlorophenoxy)propionate, (RS)-2-(4-chlorophenoxy)propionate, (RS)-2-(m-chlorophenoxy)propionate, however it can only accept 2-oxoglutarate as oxygen acceptor. This chain is (R)-phenoxypropionate/alpha-ketoglutarate-dioxygenase, found in Delftia acidovorans (Pseudomonas acidovorans).